The following is a 984-amino-acid chain: MEYHWILLCVSLCFTFHPGDTKPTITPAGTYVVVSLNAPLELQCQGEKAMQWQREERPKVRGETKVDGKSTLYIPKAHPAHMGRYICLEETSQERASIYIYVKDPDNPFRKSMVSNILSREGDSASIPCLATDPSLENLQLKTCSSKALASGLHFSPSLEQGIIIHNTQKSYEGCYVCTGRLKETNVRSHDYHLTVRPVPVAPPVIMMQAPKRVILIRDESLYLTCNTTNVNGNIKLKWVAPLGSQPAKVDGSSRILTENFTQARSATLHIAAVRIQDTGRYQCEAENEKGVSTQSVWLDVFEKGFMYSNPVNNGTIQVRAGESLLLSVSIEAYPMPRSASWSFMGRGLHNTSDHVITTRSHEYTYSSELKLVRLKMSEGGVYTFQASNGDASVNHTFTIFVISKPEIVSHEGPVDGQVRCVAEGFPAPQITWYYCEQPYARCSQQVNATQEEQNVITVTLFSPLFGKTEVESRVNISRGRFSTLECVATVEGEQAFTLFSISERTISHDLFSPLLIGSVSAACILCLILIVLFYKYMQKPKYQIQWKVIEGIHGNNYVYIDPTQLPYDHQWEFPRKNLRFGKTLGSGAFGKVVEATAYGLANEDSMMTVAVKMLKSSAHSTEKEALMSELKVLIYLGNHINIVNLLGACTVGGPTLVITEYCCFGDLLNFLRRKRESFICFKLEEDCHYRNIMLQREMAGDSLNGYMTMRPSAAGKPSSSSSSEKRRSLREGSPYVEEDSESEMFDEDSLSLDTEDLLSFSYQVAKGMEFLTSKNCIHRDLAARNILLTQGRVAKICDFGLARDINTDSNYVVKGNARLPVKWMSPESIFECVYTFESDVWSYGILLWEIFSLGNSPYPGMPVDAKFYKLIKEGYRMDAPEFAPSEMYQIMRSCWDADPLNRPPFRKVVERIEQQLSDTTKHIYLNFSSRVPVMPRGREESSTHSMASQPFNSAGNNSPPSRPLLLHHEVFLEGTEPFRVQRV.

The N-terminal stretch at 1-21 (MEYHWILLCVSLCFTFHPGDT) is a signal peptide. Over 22 to 514 (KPTITPAGTY…RTISHDLFSP (493 aa)) the chain is Extracellular. 5 Ig-like C2-type domains span residues 23–97 (PTIT…ERAS), 98–197 (IYIY…LTVR), 203–300 (PPVI…VWLD), 311–395 (PVNN…ASVN), and 398–498 (FTIF…QAFT). Intrachain disulfides connect Cys44–Cys87, Cys129–Cys178, Cys144–Cys175, and Cys226–Cys284. N-linked (GlcNAc...) asparagine glycosylation is found at Asn227, Asn260, Asn314, Asn351, Asn395, Asn448, and Asn476. The cysteines at positions 421 and 487 are disulfide-linked. The helical transmembrane segment at 515-535 (LLIGSVSAACILCLILIVLFY) threads the bilayer. At 536–984 (KYMQKPKYQI…GTEPFRVQRV (449 aa)) the chain is on the cytoplasmic side. Tyr558 lines the Mg(2+) pocket. Phosphotyrosine; by autocatalysis occurs at positions 558 and 560. The region spanning 579-926 (LRFGKTLGSG…LSDTTKHIYL (348 aa)) is the Protein kinase domain. Residues 586 to 593 (GSGAFGKV), Lys613, and 661 to 667 (EYCCFGD) each bind ATP. Phosphotyrosine; by autocatalysis is present on residues Tyr690 and Tyr707. Low complexity predominate over residues 711–723 (RPSAAGKPSSSSS). The disordered stretch occupies residues 711–749 (RPSAAGKPSSSSSSEKRRSLREGSPYVEEDSESEMFDED). The span at 737–749 (VEEDSESEMFDED) shows a compositional bias: acidic residues. Asp781 acts as the Proton acceptor in catalysis. Arg785 is a binding site for ATP. Residues Asn786 and Asp799 each coordinate Mg(2+). Residues Tyr812 and Tyr925 each carry the phosphotyrosine; by autocatalysis modification. The tract at residues 936–963 (PRGREESSTHSMASQPFNSAGNNSPPSR) is disordered. A compositionally biased stretch (polar residues) spans 944–960 (THSMASQPFNSAGNNSP).

This sequence belongs to the protein kinase superfamily. Tyr protein kinase family. CSF-1/PDGF receptor subfamily. Ubiquitinated. Rapidly ubiquitinated after autophosphorylation induced by kitlg/scf binding, leading to internalization and degradation. Post-translationally, autophosphorylated on tyrosine residues. Phosphorylated tyrosine residues are important for interaction with specific binding partners.

It localises to the cell membrane. The enzyme catalyses L-tyrosyl-[protein] + ATP = O-phospho-L-tyrosyl-[protein] + ADP + H(+). Tyrosine-protein kinase that acts as a cell-surface receptor for the cytokine kitlg/scf and plays an essential role in the regulation of cell survival and proliferation, hematopoiesis, stem cell maintenance, gametogenesis, mast cell development, migration and function, and in melanogenesis. This is Mast/stem cell growth factor receptor Kit (kit) from Takifugu rubripes (Japanese pufferfish).